A 956-amino-acid polypeptide reads, in one-letter code: Zinc finger CCHC domain-containing protein 14 (956 aa).

Disordered stretches follow at residues 25 to 50 (SSLN…PSGA), 78 to 99 (ALHT…GKHG), 206 to 229 (SSSS…KVGA), 243 to 276 (GIPS…GTGS), 361 to 464 (KEKS…EKEK), 485 to 505 (PVQN…PQLM), 543 to 583 (LEER…QGLS), and 750 to 786 (FYSG…PQPA). Positions 29 to 43 (SGGGGGGGGGGGGKS) are enriched in gly residues. 2 stretches are compositionally biased toward low complexity: residues 206 to 225 (SSSS…PSLP) and 246 to 265 (SSQS…SASL). Residues 369 to 389 (LNSSAPSLVTSSGVARVTPTS) are compositionally biased toward polar residues. A compositionally biased stretch (low complexity) spans 423–432 (SSEYSSSSSS). A compositionally biased stretch (basic and acidic residues) spans 438-464 (VREESSDSAEESDRRVDIHVEGTEKEK). Residues 750–768 (FYSGGAGSSSPGNIPASSQ) are compositionally biased toward low complexity. The CCHC-type zinc-finger motif lies at 913 to 930 (LSCYNCGATGHRAQDCKQ).

This Mus musculus (Mouse) protein is Zinc finger CCHC domain-containing protein 14 (Zcchc14).